The following is a 360-amino-acid chain: MTATLERREGVSLWERFCAWITSTENRLYIGWFGCLMFPTLLTATSCYIIAFIAAPPVDIDGIREPVAGSLLYGNNIISGAVIPSSNAIGMHFYPIWEAASIDEWLYNGGPYQLIVLHFLLGVASYMGREWELSYRLGMRPWIFVAFSAPVAAASAVFLVYPIGQGSFSDGMPLGISGTFNFMLVFQAEHNILMHPFHMAGVAGVFGGSLFSAMHGSLVTSSLIRETTENESTNYGYKFGQEEETYNIVAAHGYFGRLIFQYASFNNSRALHFFLAAWPVVGIWLTAMGVSTMAFNLNGFNFNQSVVDSQGRVINTWADIINRADLGMEVMHERNAHNFPLDLASGDVLPVALNAPAVNG.

3 helical membrane passes run 29-46, 118-133, and 142-156; these read YIGW…TATS, HFLL…EWEL, and WIFV…AASA. A chlorophyll a-binding site is contributed by His118. Tyr126 is a pheophytin a binding site. Positions 170 and 189 each coordinate [CaMn4O5] cluster. Residues 197 to 218 form a helical membrane-spanning segment; the sequence is FHMAGVAGVFGGSLFSAMHGSL. His198 lines the chlorophyll a pocket. Residues His215 and 264 to 265 each bind a quinone; that span reads SF. Position 215 (His215) interacts with Fe cation. His272 provides a ligand contact to Fe cation. A helical transmembrane segment spans residues 274 to 288; sequence FLAAWPVVGIWLTAM. His332, Glu333, Asp342, and Ala344 together coordinate [CaMn4O5] cluster. Positions 345–360 are excised as a propeptide; it reads SGDVLPVALNAPAVNG.

Belongs to the reaction center PufL/M/PsbA/D family. In terms of assembly, PSII is composed of 1 copy each of membrane proteins PsbA, PsbB, PsbC, PsbD, PsbE, PsbF, PsbH, PsbI, PsbJ, PsbK, PsbL, PsbM, PsbT, PsbX, PsbY, PsbZ, Psb30/Ycf12, at least 3 peripheral proteins of the oxygen-evolving complex and a large number of cofactors. It forms dimeric complexes. The cofactor is The D1/D2 heterodimer binds P680, chlorophylls that are the primary electron donor of PSII, and subsequent electron acceptors. It shares a non-heme iron and each subunit binds pheophytin, quinone, additional chlorophylls, carotenoids and lipids. D1 provides most of the ligands for the Mn4-Ca-O5 cluster of the oxygen-evolving complex (OEC). There is also a Cl(-1) ion associated with D1 and D2, which is required for oxygen evolution. The PSII complex binds additional chlorophylls, carotenoids and specific lipids.. In terms of processing, tyr-161 forms a radical intermediate that is referred to as redox-active TyrZ, YZ or Y-Z. C-terminally processed by CTPA; processing is essential to allow assembly of the oxygen-evolving complex and thus photosynthetic growth.

Its subcellular location is the plastid. It localises to the chloroplast thylakoid membrane. It carries out the reaction 2 a plastoquinone + 4 hnu + 2 H2O = 2 a plastoquinol + O2. Photosystem II (PSII) is a light-driven water:plastoquinone oxidoreductase that uses light energy to abstract electrons from H(2)O, generating O(2) and a proton gradient subsequently used for ATP formation. It consists of a core antenna complex that captures photons, and an electron transfer chain that converts photonic excitation into a charge separation. The D1/D2 (PsbA/PsbD) reaction center heterodimer binds P680, the primary electron donor of PSII as well as several subsequent electron acceptors. In Trieres chinensis (Marine centric diatom), this protein is Photosystem II protein D1.